Reading from the N-terminus, the 674-residue chain is Protein tesmin/TSO1-like CXC 2 (674 aa).

Polar residues-rich tracts occupy residues 1 to 16 (MDTP…TPIS) and 76 to 89 (THNS…NSVE). 2 disordered regions span residues 1-20 (MDTP…KSRF) and 69-113 (KESR…GLNI). A compositionally biased stretch (basic and acidic residues) spans 95–109 (STSHEEVPAEGEDTK). In terms of domain architecture, CRC spans 373–498 (SCKRCNCKKS…RCEGCKNAFG (126 aa)). Disordered regions lie at residues 504 to 529 (SIDM…SQQN) and 623 to 655 (IPNI…RRNG). Acidic residues predominate over residues 507–516 (MEAEQEEENE).

The protein belongs to the lin-54 family. Ubiquitous but expressed mostly in all the aerial organs with highest expression in flowers.

It is found in the nucleus. In terms of biological role, plays a role in development of both male and female reproductive tissues. This chain is Protein tesmin/TSO1-like CXC 2 (TCX2), found in Arabidopsis thaliana (Mouse-ear cress).